Reading from the N-terminus, the 161-residue chain is Type IV major fimbrial protein FimA (161 aa).

The propeptide at Met-1–Gly-7 is leader sequence. Residue Phe-8 is modified to N-methylphenylalanine. A helical transmembrane segment spans residues Phe-8–Ile-28. Residues Cys-63 and Cys-106 are joined by a disulfide bond.

It belongs to the N-Me-Phe pilin family. In terms of assembly, the pili are polar flexible filaments of about 5.4 nanometers diameter and 2.5 micrometers average length; they consist of only a single polypeptide chain arranged in a helical configuration of five subunits per turn in the assembled pilus.

It localises to the fimbrium. Its subcellular location is the membrane. Functionally, major component of the type IV fimbriae that plays an essential role in twitching motility, natural transformation, and protease secretion. The polypeptide is Type IV major fimbrial protein FimA (fimA) (Dichelobacter nodosus (Bacteroides nodosus)).